A 249-amino-acid chain; its full sequence is uncharacterized protein (249 aa).

This sequence belongs to the ycf23 family.

It localises to the plastid. It is found in the chloroplast. This is an uncharacterized protein from Cyanidium caldarium (Red alga).